The chain runs to 1413 residues: MKALLDLFKQVQQEEVFDAIKIGLASPDKIRSWSFGEVKKPETINYRTFKPERDGLFCAKIFGPIKDYECLCGKYKRLKHRGVICEKCGVEVTLAKVRRERMGHIELASPVAHIWFLKSLPSRLGMVLDMTLRDIERVLYFEAYVVIEPGMTPLKARQIMTEEDYYNKVEEYGDEFRAEMGAEGVRELLRAINIDEQVETLRTELKNTGSEAKIKKYAKRLKVLEAFQRSGIKPEWMILEVLPVLPPELRPLVPLDGGRFATSDLNDLYRRVINRNNRLKRLLELKAPEIIVRNEKRMLQEAVDSLLDNGRRGKAMTGANKRPLKSLADMIKGKGGRFRQNLLGKRVDYSGRSVIVVGPTLKLHQCGLPKLMALELFKPFIFNKLEVMGVATTIKAAKKEVENQTPVVWDILEEVIREHPVMLNRAPTLHRLGIQAFEPVLIEGKAIQLHPLVCAAFNADFDGDQMAVHVPLSLEAQMEARTLMLASNNVLFPANGDPSIVPSQDIVLGLYYATREAINAKGEGLSFTGVSEVIRAYENKEVELASRVNVRITEMVRNEDTSEGAPQFVPKISLYATTVGRAILSEILPHGLPFSVLNKPLKKKEISRLINTAFRKCGLRATVVFADQLMQSGFRLATRAGISICVDDMLVPPQKETIVGDAAKKVKEYDRQYMSGLVTAQERYNNVVDIWSATSEAVGKAMMEQLSTEPVTDRDGNETRQESFNSIYMMADSGARGSAVQIRQLAGMRGLMAKPDGSIIETPITANFREGLNVLQYFISTHGARKGLADTALKTANSGYLTRRLVDVTQDLVVVEDDCGTSNGVAMKALVEGGEVVEALRDRILGRVAVADVVNPETQETLYESGTLLDETAVEEIERLGIDEVRVRTPLTCETRYGLCAACYGRDLGRGSLVNVGEAVGVIAAQSIGEPGTQLTMRTFHIGGAASRAAVASSVEAKSNGIVRFTATMRYVTNAKGEQIVISRSGEALITDDIGRERERHKIPYGATLLQLDGAAIKAGTQLATWDPMTRPIITEYGGTVKFENVEEGVTVAKQIDDVTGLSTLVVIDVKRRGSQASKSVRPQVKLLDANGEEVKIPGTEHAVQIGFQVGALITVKDGQQVQVGEVLARIPTEAQKTRDITGGLPRVAELFEARSPKDAGILAEVTGTTSFGKDTKGKQRLVITDLEGNQHEFLIAKEKQVLVHDAQVVNKGEMIVDGPADPHDILRLQGIEALSRYIVDEVQDVYRLQGVKINDKHIEVIVRQMLRRVQITDNGDTRFIPGEQVERSDMLDENDRMIAEDKRPASYDNVLLGITKASLSTDSFISAASFQETTRVLTEAAIMGKRDDLRGLKENVIVGRLIPAGTGLAFHKARKAKEMSDRERFDQIAAEEAFDFGTPSTPAEEPQHPAAE.

Positions 70, 72, 85, and 88 each coordinate Zn(2+). Residues Asp-460, Asp-462, and Asp-464 each contribute to the Mg(2+) site. Zn(2+) is bound by residues Cys-819, Cys-893, Cys-900, and Cys-903.

The protein belongs to the RNA polymerase beta' chain family. The RNAP catalytic core consists of 2 alpha, 1 beta, 1 beta' and 1 omega subunit. When a sigma factor is associated with the core the holoenzyme is formed, which can initiate transcription. Mg(2+) serves as cofactor. It depends on Zn(2+) as a cofactor.

The catalysed reaction is RNA(n) + a ribonucleoside 5'-triphosphate = RNA(n+1) + diphosphate. DNA-dependent RNA polymerase catalyzes the transcription of DNA into RNA using the four ribonucleoside triphosphates as substrates. This chain is DNA-directed RNA polymerase subunit beta', found in Burkholderia ambifaria (strain MC40-6).